Here is a 456-residue protein sequence, read N- to C-terminus: F-box/FBD/LRR-repeat protein At1g13780 (456 aa).

An F-box domain is found at 9-55 (FDRISELPESLISQILLHLPTKASVKTSVLSTRWKNLWLNVPGLDLN). LRR repeat units follow at residues 197-220 (LEEL…SLKR), 243-266 (APGL…NLTS), 302-325 (ISSV…SKVG), and 355-379 (FPNL…ELVN). The FBD domain maps to 372-424 (MEKFELVNVPRCFVSTLEHVEIKGLFDWGEQDMKIASYFLENSAVLKKLILSF).

In Arabidopsis thaliana (Mouse-ear cress), this protein is F-box/FBD/LRR-repeat protein At1g13780.